A 236-amino-acid polypeptide reads, in one-letter code: Rho-related GTP-binding protein RhoV (236 aa).

Residues 1 to 28 form a disordered region; that stretch reads MPPRELSEAEPPPLPASTPPPRRRSAPP. The segment covering 10-20 has biased composition (pro residues); sequence EPPPLPASTPP. Position 25 is a phosphoserine (Ser25). Residues 38–45, 85–89, and 143–146 contribute to the GTP site; these read GDGAVGKS, DTAGQ, and TQAD. Cys234 is lipidated: S-palmitoyl cysteine.

Belongs to the small GTPase superfamily. Rho family. Interacts with PAK2. Requires Mg(2+) as cofactor. Highly expressed in brain and testis and at lower levels in spleen and lung.

It is found in the cell membrane. Its subcellular location is the endosome membrane. Plays a role in the control of the actin cytoskeleton via activation of the JNK pathway. This chain is Rho-related GTP-binding protein RhoV, found in Rattus norvegicus (Rat).